Consider the following 305-residue polypeptide: Ribonucleoside-diphosphate reductase small subunit (305 aa).

Positions 64, 94, and 97 each coordinate Fe cation. The active site involves tyrosine 101. Residues 150–170 (ILLFLLVEGIFFISSFFSIGL) form a helical membrane-spanning segment. Residues glutamate 157, glutamate 191, and histidine 194 each coordinate Fe cation.

The protein belongs to the ribonucleoside diphosphate reductase small chain family. As to quaternary structure, heterotetramer composed of a homodimer of the large subunit (R1) and a homodimer of the small subunit (R2). Larger multisubunit protein complex are also active, composed of (R1)n(R2)n. The cofactor is Fe cation.

Its subcellular location is the host membrane. The enzyme catalyses a 2'-deoxyribonucleoside 5'-diphosphate + [thioredoxin]-disulfide + H2O = a ribonucleoside 5'-diphosphate + [thioredoxin]-dithiol. Ribonucleoside-diphosphate reductase holoenzyme provides the precursors necessary for viral DNA synthesis. Allows virus growth in non-dividing cells, as well as reactivation from latency in infected hosts. Catalyzes the biosynthesis of deoxyribonucleotides from the corresponding ribonucleotides. The chain is Ribonucleoside-diphosphate reductase small subunit from Saimiri sciureus (Common squirrel monkey).